Here is a 3391-residue protein sequence, read N- to C-terminus: Genome polyprotein (3391 aa).

Residues 1–15 (MNNQRKKTARPSFNM) form an interaction with host EXOC1 region. The Cytoplasmic segment spans residues 1-101 (MNNQRKKTAR…LNIMNRRKRS (101 aa)). Residues 37 to 72 (LLSGQGPMKLVMAFIAFLRFLAIPPTAGILARWGSF) form a hydrophobic; homodimerization of capsid protein C region. The propeptide at 101–114 (SVTMLLMLLPTALA) is ER anchor for the capsid protein C, removed in mature form by serine protease NS3. Residues 102 to 119 (VTMLLMLLPTALAFHLTT) traverse the membrane as a helical segment. The Extracellular segment spans residues 120–242 (RGGEPHMIVS…QIQRVETWAL (123 aa)). Asn183 carries N-linked (GlcNAc...) asparagine; by host glycosylation. Residues 243–260 (RHPGFTVIALFLAHAIGT) form a helical membrane-spanning segment. A topological domain (cytoplasmic) is located at residue Ser261. Residues 262–280 (ITQKGIIFILLMLVTPSMA) traverse the membrane as a helical segment. Topologically, residues 281 to 725 (MRCVGIGSRD…HQVFGTAYGV (445 aa)) are extracellular. Disulfide bonds link Cys283-Cys310, Cys340-Cys401, Cys354-Cys385, and Cys372-Cys396. The N-linked (GlcNAc...) asparagine; by host glycan is linked to Asn347. A fusion peptide region spans residues 378–391 (DRGWGNGCGLFGKG). A glycan (N-linked (GlcNAc...) asparagine; by host) is linked at Asn433. 2 cysteine pairs are disulfide-bonded: Cys465-Cys565 and Cys582-Cys613. The chain crosses the membrane as a helical span at residues 726 to 746 (LFSGVSWTMKIGIGILLTWLG). Residues 747–752 (LNSRST) are Cytoplasmic-facing. Residues 753–773 (SLSMTCIAVGMVTLYLGVMVQ) traverse the membrane as a helical segment. Topologically, residues 774–1198 (ADSGCVINWK…NASDRMGMGT (425 aa)) are extracellular. Disulfide bonds link Cys778–Cys789, Cys829–Cys917, Cys953–Cys997, Cys1054–Cys1103, Cys1065–Cys1087, and Cys1086–Cys1090. 2 N-linked (GlcNAc...) asparagine; by host glycosylation sites follow: Asn904 and Asn981. N-linked (GlcNAc...) asparagine; by host glycosylation occurs at Asn1189. Residues 1199–1219 (TYLALMATFKMRPMFAVGLLF) form a helical membrane-spanning segment. The Cytoplasmic segment spans residues 1220–1225 (RRLTSR). A helical transmembrane segment spans residues 1226–1244 (EVLLLTIGLSLVASVELPN). Residues 1245–1268 (SLEELGDGLAMGIMILKLLTDFQS) lie on the Lumenal side of the membrane. Residues 1269–1289 (HQLWATLLSLTFVKTTFSLHY) form a helical membrane-spanning segment. Ala1290 is a topological domain (cytoplasmic). A helical membrane pass occupies residues 1291 to 1309 (WKTMAMVLSIVSLFPLCLS). Residues 1310-1314 (TTSQK) lie on the Lumenal side of the membrane. The helical transmembrane segment at 1315–1335 (TTWLPVLLGSLGCKPLTMFLI) threads the bilayer. Residues 1336-1345 (AENKIWGRKS) lie on the Cytoplasmic side of the membrane. The chain crosses the membrane as a helical span at residues 1346-1366 (WPLNEGIMAVGIVSILLSSLL). At 1367 to 1369 (KND) the chain is on the lumenal side. The chain crosses the membrane as a helical span at residues 1370–1390 (VPLAGPLIAGGMLIACYVISG). Topologically, residues 1391-1446 (SSADLSLEKAAEVSWEEEAEHSGASHNILVEVQDDGTMKIKDEERDDTLTILLKAT) are cytoplasmic. The interval 1397 to 1436 (LEKAAEVSWEEEAEHSGASHNILVEVQDDGTMKIKDEERD) is interacts with and activates NS3 protease. The segment at residues 1447-1467 (LLAVSGVYPLSIPATLFVWYF) is an intramembrane region (helical). Residues 1468-2147 (WQKKKQRSGV…MEELPDTIET (680 aa)) lie on the Cytoplasmic side of the membrane. The 178-residue stretch at 1475–1652 (SGVLWDTPSP…KASQEGPLPE (178 aa)) folds into the Peptidase S7 domain. Catalysis depends on charge relay system; for serine protease NS3 activity residues His1525, Asp1549, and Ser1609. A Helicase ATP-binding domain is found at 1655–1811 (DEVFRKRNLT…QSNAVIQDEE (157 aa)). The important for RNA-binding stretch occupies residues 1659-1662 (RKRN). 1668-1675 (LHPGSGKT) is a binding site for ATP. Residues 1759–1762 (DEAH) carry the DEAH box motif. One can recognise a Helicase C-terminal domain in the interval 1821 to 1988 (SGYEWITDFP…IIPALFEPER (168 aa)). Lys1863 carries the N6-acetyllysine; by host modification. The helical transmembrane segment at 2148 to 2168 (LMLLALIAVLTGGVTLFFLSG) threads the bilayer. The Lumenal segment spans residues 2169-2170 (KG). Positions 2171-2191 (LGKTSIGLLCVMASSVLLWMA) form an intramembrane region, helical. Ser2192 is a topological domain (lumenal). Residues 2193 to 2213 (VEPHWIAASIILEFFLMVLLI) form a helical membrane-spanning segment. Over 2214–2228 (PEPDRQRTPQDNQLA) the chain is Cytoplasmic. A helical transmembrane segment spans residues 2229–2249 (YVVIGLLFMILTVAANEMGLL). At 2250–2275 (ETTKKDLGIGHVAAENHHHATMLDVD) the chain is on the lumenal side. The segment at residues 2276-2296 (LRPASAWTLYAVATTVITPMM) is an intramembrane region (helical). Topologically, residues 2297-2348 (RHTIENTTANISLTAIANQAAILMGLDKGWPISKMDIGVPLLALGCYSQVNP) are lumenal. 2 N-linked (GlcNAc...) asparagine; by host glycosylation sites follow: Asn2302 and Asn2306. A helical transmembrane segment spans residues 2349–2369 (LTLTAAVLMLVAHYAIIGPGL). Over 2370 to 2414 (QAKATREAQKRTAAGIMKNPTVDGIVAIDLDPVVYDAKFEKQLGQ) the chain is Cytoplasmic. The helical transmembrane segment at 2415–2435 (IMLLILCTSQILLMRTTWALC) threads the bilayer. Residues 2436–2460 (ESITLATGPLTTLWEGSPGKFWNTT) lie on the Lumenal side of the membrane. Residue Asn2458 is glycosylated (N-linked (GlcNAc...) asparagine; by host). The chain crosses the membrane as a helical span at residues 2461–2481 (IAVSMANIFRGSYLAGAGLAF). The Cytoplasmic segment spans residues 2482-3391 (SLMKSLGGGR…NESDPEGALW (910 aa)). Positions 2494–2755 (TGAKGKHWER…DVDLGAGTRH (262 aa)) constitute an mRNA cap 0-1 NS5-type MT domain. Ser2548 lines the S-adenosyl-L-methionine pocket. Ser2548 is subject to Phosphoserine. The active-site For 2'-O-MTase activity is Lys2553. Residues 2569-2572 (VIDL) carry the SUMO-interacting motif motif. S-adenosyl-L-methionine is bound by residues Gly2578, Trp2579, Thr2596, Lys2597, Asp2623, and Val2624. The For 2'-O-MTase activity role is filled by Asp2638. An S-adenosyl-L-methionine-binding site is contributed by Ile2639. Residues Lys2672 and Glu2708 each act as for 2'-O-MTase activity in the active site. Residue Tyr2710 coordinates S-adenosyl-L-methionine. 4 residues coordinate Zn(2+): Glu2929, His2933, Cys2938, and Cys2941. Residues 3019–3168 (GNMYADDTAG…KPIDDRFATA (150 aa)) form the RdRp catalytic domain. Zn(2+)-binding residues include His3203, Cys3219, and Cys3338.

It in the N-terminal section; belongs to the class I-like SAM-binding methyltransferase superfamily. mRNA cap 0-1 NS5-type methyltransferase family. In terms of assembly, homodimer. Interacts (via N-terminus) with host EXOC1 (via C-terminus); this interaction results in EXOC1 degradation through the proteasome degradation pathway. As to quaternary structure, forms heterodimers with envelope protein E in the endoplasmic reticulum and Golgi. Homodimer; in the endoplasmic reticulum and Golgi. Interacts with protein prM. Interacts with non-structural protein 1. In terms of assembly, homodimer; Homohexamer when secreted. Interacts with envelope protein E. As to quaternary structure, interacts (via N-terminus) with serine protease NS3. Forms a heterodimer with serine protease NS3. May form homooligomers. In terms of assembly, forms a heterodimer with NS2B. Interacts with NS4B. Interacts with unphosphorylated RNA-directed RNA polymerase NS5; this interaction stimulates RNA-directed RNA polymerase NS5 guanylyltransferase activity. Interacts with host SHFL. As to quaternary structure, interacts with host MAVS; this interaction inhibits the synthesis of IFN-beta. Interacts with host SHFL. Interacts with host AUP1; the interaction occurs in the presence of Dengue virus NS4B and induces lipophagy which facilitates production of virus progeny particles. Interacts with serine protease NS3. In terms of assembly, homodimer. Interacts with host STAT2; this interaction inhibits the phosphorylation of the latter, and, when all viral proteins are present (polyprotein), targets STAT2 for degradation. Interacts with serine protease NS3. Post-translationally, specific enzymatic cleavages in vivo yield mature proteins. Cleavages in the lumen of endoplasmic reticulum are performed by host signal peptidase, whereas cleavages in the cytoplasmic side are performed by serine protease NS3. Signal cleavage at the 2K-4B site requires a prior NS3 protease-mediated cleavage at the 4A-2K site. In terms of processing, cleaved in post-Golgi vesicles by a host furin, releasing the mature small envelope protein M, and peptide pr. This cleavage is incomplete as up to 30% of viral particles still carry uncleaved prM. N-glycosylated. Post-translationally, N-glycosylated. The excreted form is glycosylated and this is required for efficient secretion of the protein from infected cells. In terms of processing, acetylated by host KAT5. Acetylation modulates NS3 RNA-binding and unwinding activities and plays an important positive role for viral replication. Sumoylation of RNA-directed RNA polymerase NS5 increases NS5 protein stability allowing proper viral RNA replication. Post-translationally, phosphorylated on serines residues. This phosphorylation may trigger NS5 nuclear localization.

The protein localises to the virion. The protein resides in the host nucleus. Its subcellular location is the host cytoplasm. It is found in the host perinuclear region. It localises to the secreted. The protein localises to the virion membrane. The protein resides in the host endoplasmic reticulum membrane. Its subcellular location is the host mitochondrion. It carries out the reaction Selective hydrolysis of -Xaa-Xaa-|-Yaa- bonds in which each of the Xaa can be either Arg or Lys and Yaa can be either Ser or Ala.. It catalyses the reaction RNA(n) + a ribonucleoside 5'-triphosphate = RNA(n+1) + diphosphate. The enzyme catalyses a ribonucleoside 5'-triphosphate + H2O = a ribonucleoside 5'-diphosphate + phosphate + H(+). The catalysed reaction is ATP + H2O = ADP + phosphate + H(+). It carries out the reaction a 5'-end (5'-triphosphoguanosine)-ribonucleoside in mRNA + S-adenosyl-L-methionine = a 5'-end (N(7)-methyl 5'-triphosphoguanosine)-ribonucleoside in mRNA + S-adenosyl-L-homocysteine. It catalyses the reaction a 5'-end (N(7)-methyl 5'-triphosphoguanosine)-ribonucleoside in mRNA + S-adenosyl-L-methionine = a 5'-end (N(7)-methyl 5'-triphosphoguanosine)-(2'-O-methyl-ribonucleoside) in mRNA + S-adenosyl-L-homocysteine + H(+). Functionally, plays a role in virus budding by binding to the cell membrane and gathering the viral RNA into a nucleocapsid that forms the core of a mature virus particle. During virus entry, may induce genome penetration into the host cytoplasm after hemifusion induced by the surface proteins. Can migrate to the cell nucleus where it modulates host functions. Overcomes the anti-viral effects of host EXOC1 by sequestering and degrading the latter through the proteasome degradation pathway. Inhibits RNA silencing by interfering with host Dicer. Its function is as follows. Prevents premature fusion activity of envelope proteins in trans-Golgi by binding to envelope protein E at pH6.0. After virion release in extracellular space, gets dissociated from E dimers. In terms of biological role, acts as a chaperone for envelope protein E during intracellular virion assembly by masking and inactivating envelope protein E fusion peptide. prM is the only viral peptide matured by host furin in the trans-Golgi network probably to avoid catastrophic activation of the viral fusion activity in acidic Golgi compartment prior to virion release. prM-E cleavage is inefficient, and many virions are only partially matured. These uncleaved prM would play a role in immune evasion. Functionally, may play a role in virus budding. Exerts cytotoxic effects by activating a mitochondrial apoptotic pathway through M ectodomain. May display a viroporin activity. Binds to host cell surface receptor and mediates fusion between viral and cellular membranes. Envelope protein is synthesized in the endoplasmic reticulum in the form of heterodimer with protein prM. They play a role in virion budding in the ER, and the newly formed immature particle is covered with 60 spikes composed of heterodimer between precursor prM and envelope protein E. The virion is transported to the Golgi apparatus where the low pH causes dissociation of PrM-E heterodimers and formation of E homodimers. prM-E cleavage is inefficient, and many virions are only partially matured. These uncleaved prM would play a role in immune evasion. Its function is as follows. Involved in immune evasion, pathogenesis and viral replication. Once cleaved off the polyprotein, is targeted to three destinations: the viral replication cycle, the plasma membrane and the extracellular compartment. Essential for viral replication. Required for formation of the replication complex and recruitment of other non-structural proteins to the ER-derived membrane structures. Excreted as a hexameric lipoparticle that plays a role against host immune response. Antagonizing the complement function. Binds to the host macrophages and dendritic cells. Inhibits signal transduction originating from Toll-like receptor 3 (TLR3). In terms of biological role, disrupts the host endothelial glycocalyx layer of host pulmonary microvascular endothelial cells, inducing degradation of sialic acid and shedding of heparan sulfate proteoglycans. NS1 induces expression of sialidases, heparanase, and activates cathepsin L, which activates heparanase via enzymatic cleavage. These effects are probably linked to the endothelial hyperpermeability observed in severe dengue disease. Functionally, component of the viral RNA replication complex that functions in virion assembly and antagonizes the host immune response. Required cofactor for the serine protease function of NS3. May have membrane-destabilizing activity and form viroporins. Its function is as follows. Displays three enzymatic activities: serine protease, NTPase and RNA c. NS3 serine protease, in association with NS2B, performs its autocleavage and cleaves the polyprotein at dibasic sites in the cytoplasm: C-prM, NS2A-NS2B, NS2B-NS3, NS3-NS4A, NS4A-2K and NS4B-NS5. NS3 RNA helicase binds RNA and unwinds dsRNA in the 3' to 5' direction. In terms of biological role, regulates the ATPase activity of the NS3 helicase activity. NS4A allows NS3 helicase to conserve energy during unwinding. Plays a role in the inhibition of the host innate immune response. Interacts with host MAVS and thereby prevents the interaction between RIGI and MAVS. In turn, IFN-beta production is impaired. Interacts with host AUP1 which mediates induction of lipophagy in host cells and facilitates production of virus progeny particles. Functionally, functions as a signal peptide for NS4B and is required for the interferon antagonism activity of the latter. Induces the formation of ER-derived membrane vesicles where the viral replication takes place. Inhibits interferon (IFN)-induced host STAT1 phosphorylation and nuclear translocation, thereby preventing the establishment of cellular antiviral state by blocking the IFN-alpha/beta pathway. Its function is as follows. Replicates the viral (+) and (-) RNA genome, and performs the capping of genomes in the cytoplasm. NS5 methylates viral RNA cap at guanine N-7 and ribose 2'-O positions. Besides its role in RNA genome replication, also prevents the establishment of cellular antiviral state by blocking the interferon-alpha/beta (IFN-alpha/beta) signaling pathway. Inhibits host TYK2 and STAT2 phosphorylation, thereby preventing activation of JAK-STAT signaling pathway. In Aedes aegypti (Yellowfever mosquito), this protein is Genome polyprotein.